A 538-amino-acid polypeptide reads, in one-letter code: BTB/POZ domain-containing protein 6 (538 aa).

An N-terminal signal peptide occupies residues 1–17; the sequence is MLLPLACLHGRVAQCLT. Disordered stretches follow at residues 29–53 and 76–115; these read PRRG…PPAK and AAVG…SPGW. Over residues 35–53 the composition is skewed to low complexity; the sequence is ARGAASTGAEAAPAAPPAK. A compositionally biased stretch (pro residues) spans 85–103; the sequence is RSPPSAPAPAPPPPAPAPP. Residues 136-206 enclose the BTB domain; sequence ADVHFVVGPP…MYSDEIDLEA (71 aa).

As to expression, expressed in lens.

It localises to the cytoplasm. Adapter protein for the cul3 E3 ubiquitin-protein ligase complex. Involved in late neuronal development and muscle formation. This is BTB/POZ domain-containing protein 6 from Homo sapiens (Human).